We begin with the raw amino-acid sequence, 1881 residues long: Kinesin-like protein KIF26A (1881 aa).

Disordered regions lie at residues 20–66, 145–193, and 309–330; these read PARE…AGGG, PASH…PPGP, and ASKR…STYP. Ser30 is subject to Phosphoserine. The region spanning 364 to 718 is the Kinesin motor domain; sequence KVKVMLRIWP…VQLAARIHRL (355 aa). 462-469 provides a ligand contact to ATP; that stretch reads GHMSLGKS. Disordered stretches follow at residues 718-778, 794-827, 846-982, 1078-1104, 1118-1266, 1328-1425, 1442-1633, and 1652-1698; these read LRRK…SSEQ, SDRE…RDAD, GSEA…QAAL, YTSQ…GSPA, LSES…PRLP, SGSL…PYRP, SKVR…SGEL, and YESM…TGLQ. Over residues 742–751 the composition is skewed to basic residues; that stretch reads RRPPHLRPFH. A compositionally biased stretch (basic and acidic residues) spans 818–827; sequence RPSEGPRDAD. Positions 905–915 are enriched in polar residues; sequence SDPSKTGTQSE. The segment covering 940–950 has biased composition (pro residues); sequence LPSPAPPPPRQ. Residues 1084–1095 show a composition bias toward low complexity; that stretch reads EGPGDPGEFPEG. Basic and acidic residues predominate over residues 1151-1162; the sequence is EESKVRSSECGR. Ser1257 is subject to Phosphoserine. The span at 1328–1353 shows a compositional bias: low complexity; sequence SGSLKTTSGSKKSVSPKGAFFPRPSG. Residues 1366–1378 show a composition bias toward polar residues; sequence LEQSTALTPTQAL. Residues 1390-1399 are compositionally biased toward basic and acidic residues; that stretch reads RGEEEARPSG. The span at 1400–1412 shows a compositional bias: polar residues; that stretch reads RSDSSVPKATSSL. Low complexity-rich tracts occupy residues 1477-1489, 1524-1537, and 1575-1587; these read PAKG…PPAG, PGPR…PGIG, and WGST…NDSG. Residues 1616–1629 are compositionally biased toward polar residues; it reads RYSSGHGSDNSSVL. The residue at position 1654 (Ser1654) is a Phosphoserine. Residues 1664–1675 show a composition bias toward low complexity; that stretch reads SASSAPDSMSES. Over residues 1685 to 1698 the composition is skewed to basic residues; that stretch reads RSLKSPKKRATGLQ. Residues 1780–1812 are a coiled coil; sequence LRLAERRQQRLQEVQAKRDHLCEELAETQGRLM.

This sequence belongs to the TRAFAC class myosin-kinesin ATPase superfamily. Kinesin family. KIF26 subfamily. Interacts with GRB2 (via SH2 domain). As to expression, expressed in several neuronal populations.

The protein resides in the cytoplasm. The protein localises to the cytoskeleton. Atypical kinesin that plays a key role in enteric neuron development. Acts by repressing a cell growth signaling pathway in the enteric nervous system development, possibly via its interaction with GRB2 that prevents GRB2-binding to SHC, thereby attenating the GDNF-Ret signaling. Binds to microtubules but lacks microtubule-based motility due to the absence of ATPase activity. Plays a critical role in cerebral cortical development. It probably acts as a microtubule stabilizer that regulates neurite growth and radial migration of cortical excitatory neurons. The sequence is that of Kinesin-like protein KIF26A (Kif26a) from Mus musculus (Mouse).